The sequence spans 110 residues: Large ribosomal subunit protein bL20 (110 aa).

The protein belongs to the bacterial ribosomal protein bL20 family.

Functionally, binds directly to 23S ribosomal RNA and is necessary for the in vitro assembly process of the 50S ribosomal subunit. It is not involved in the protein synthesizing functions of that subunit. The protein is Large ribosomal subunit protein bL20 of Shigella boydii serotype 4 (strain Sb227).